The primary structure comprises 265 residues: Hydroxyethylthiazole kinase (265 aa).

Position 50 (M50) interacts with substrate. Residues R125 and T171 each coordinate ATP. Residue G198 participates in substrate binding.

Belongs to the Thz kinase family. Mg(2+) is required as a cofactor.

The catalysed reaction is 5-(2-hydroxyethyl)-4-methylthiazole + ATP = 4-methyl-5-(2-phosphooxyethyl)-thiazole + ADP + H(+). Its pathway is cofactor biosynthesis; thiamine diphosphate biosynthesis; 4-methyl-5-(2-phosphoethyl)-thiazole from 5-(2-hydroxyethyl)-4-methylthiazole: step 1/1. Catalyzes the phosphorylation of the hydroxyl group of 4-methyl-5-beta-hydroxyethylthiazole (THZ). The sequence is that of Hydroxyethylthiazole kinase from Salmonella arizonae (strain ATCC BAA-731 / CDC346-86 / RSK2980).